Consider the following 926-residue polypeptide: Alpha-aminoadipic semialdehyde synthase, mitochondrial (926 aa).

Residues methionine 1–alanine 27 constitute a mitochondrion transit peptide. The tract at residues leucine 28 to leucine 455 is lysine-ketoglutarate reductase. Residues lysine 48, lysine 52, and lysine 56 each carry the N6-acetyllysine modification. Lysine 93 carries the post-translational modification N6-acetyllysine; alternate. Lysine 93 carries the N6-succinyllysine; alternate modification. Lysine 128 bears the N6-acetyllysine mark. Lysine 138 is modified (N6-acetyllysine; alternate). Lysine 138 carries the N6-succinyllysine; alternate modification. Lysine 274 carries the N6-succinyllysine modification. At lysine 286 the chain carries N6-acetyllysine; alternate. Lysine 286 carries the N6-succinyllysine; alternate modification. N6-succinyllysine is present on lysine 333. At lysine 458 the chain carries N6-acetyllysine; alternate. Lysine 458 carries the post-translational modification N6-succinyllysine; alternate. The saccharopine dehydrogenase stretch occupies residues methionine 477 to leucine 926. Residues serine 488, aspartate 512, and glutamine 516 each coordinate NAD(+). An N6-acetyllysine; alternate mark is found at lysine 523 and lysine 535. An N6-succinyllysine; alternate mark is found at lysine 523 and lysine 535. Positions 554, 576, and 577 each coordinate NAD(+). Residue serine 577–tyrosine 578 coordinates L-saccharopine. Lysine 584 carries the N6-acetyllysine; alternate modification. Lysine 584 is modified (N6-succinyllysine; alternate). 3 residues coordinate NAD(+): leucine 603, aspartate 604, and proline 605. Aspartate 604 provides a ligand contact to L-saccharopine. Arginine 703 lines the L-saccharopine pocket. Residue lysine 707 is modified to N6-acetyllysine. L-saccharopine is bound at residue threonine 724 to arginine 726. At lysine 732 the chain carries N6-succinyllysine. The residue at position 739 (lysine 739) is an N6-acetyllysine. Lysine 761 is modified (N6-acetyllysine; alternate). Lysine 761 carries the post-translational modification N6-succinyllysine; alternate. An N6-acetyllysine mark is found at lysine 778 and lysine 780.

The protein in the N-terminal section; belongs to the AlaDH/PNT family. In the C-terminal section; belongs to the saccharopine dehydrogenase family. As to quaternary structure, homotetramer. In terms of tissue distribution, highly expressed in kidney and liver, very low expression is seen in heart, brain, spleen, lung, skeletal muscle and testis.

Its subcellular location is the mitochondrion. The enzyme catalyses L-saccharopine + NADP(+) + H2O = L-lysine + 2-oxoglutarate + NADPH + H(+). The catalysed reaction is L-saccharopine + NAD(+) + H2O = (S)-2-amino-6-oxohexanoate + L-glutamate + NADH + H(+). It functions in the pathway amino-acid degradation; L-lysine degradation via saccharopine pathway; glutaryl-CoA from L-lysine: step 1/6. It participates in amino-acid degradation; L-lysine degradation via saccharopine pathway; glutaryl-CoA from L-lysine: step 2/6. Its function is as follows. Bifunctional enzyme that catalyzes the first two steps in lysine degradation. This chain is Alpha-aminoadipic semialdehyde synthase, mitochondrial, found in Mus musculus (Mouse).